A 218-amino-acid chain; its full sequence is Small ribosomal subunit protein uS3c (218 aa).

The region spanning 43-118 (IKNYVQKNTR…KLNIAITRIG (76 aa)) is the KH type-2 domain.

It belongs to the universal ribosomal protein uS3 family. As to quaternary structure, part of the 30S ribosomal subunit.

The protein localises to the plastid. Its subcellular location is the chloroplast. In Gossypium barbadense (Sea Island cotton), this protein is Small ribosomal subunit protein uS3c (rps3).